A 693-amino-acid chain; its full sequence is Polyribonucleotide nucleotidyltransferase (693 aa).

2 residues coordinate Mg(2+): D486 and D492. Positions 553–612 constitute a KH domain; that stretch reads PRIHTIKINPEKIKDVIGKGGSVIRMLTEETGTTIEIEDDGTVKISAVMQEKAKCAIQRI. An S1 motif domain is found at 622–690; that stretch reads GSVYTGKVTR…RQGRLRLSIK (69 aa).

Belongs to the polyribonucleotide nucleotidyltransferase family. In terms of assembly, component of the RNA degradosome, which is a multiprotein complex involved in RNA processing and mRNA degradation. It depends on Mg(2+) as a cofactor.

The protein resides in the cytoplasm. The enzyme catalyses RNA(n+1) + phosphate = RNA(n) + a ribonucleoside 5'-diphosphate. Involved in mRNA degradation. Catalyzes the phosphorolysis of single-stranded polyribonucleotides processively in the 3'- to 5'-direction. This is Polyribonucleotide nucleotidyltransferase from Buchnera aphidicola subsp. Baizongia pistaciae (strain Bp).